The primary structure comprises 4085 residues: Replicase polyprotein 1a (4085 aa).

The 108-residue stretch at 2–109 (ACNRVTLAVA…EFDVVFGKRG (108 aa)) folds into the CoV Nsp1 globular domain. Positions 113 to 359 (VTYTDQYLCG…RNSVTDECRL (247 aa)) constitute a CoV Nsp2 N-terminal domain. Zn(2+) contacts are provided by Cys-246, Cys-248, Cys-265, and Cys-266. The interval 246–266 (CTCGTKSWSVGDWTGFKSSCC) is C4. Positions 389–775 (YDDIFAESKP…LEAYNAFLDT (387 aa)) constitute a CoV Nsp2 middle domain. The 125-residue stretch at 773–897 (LDTVVSTVKI…LPVAFTKAAG (125 aa)) folds into the CoV Nsp2 C-terminal domain. Residues 898–993 (GKVSFSDDVE…VMISEWPLSV (96 aa)) enclose the Ubiquitin-like 1 domain. Residues 1016–1268 (VNSIFDIETV…DTTPKEEFVV (253 aa)) form the Peptidase C16 1 domain. Cys-1054 functions as the For PL1-PRO activity in the catalytic mechanism. A C4-type 1; degenerate zinc finger spans residues 1126-1157 (CSCTSGRLEESGAVLFCTPTKKAFPYGTCLNC). Residues His-1205 and Asp-1218 each act as for PL1-PRO activity in the active site. The region spanning 1269–1436 (KEKLNAFLVH…KVKDFVSGLV (168 aa)) is the Macro domain. The Ubiquitin-like 2 domain occupies 1600–1655 (AKVITIKVTEDGVNVHDVTVTTDKSFEQQVGVIADKDKDLSGAVPSDLNTSELLTK). In terms of domain architecture, Peptidase C16 2 spans 1663 to 1914 (EFYGFKDAVT…TVKPKPVINQ (252 aa)). The For PL2-PRO activity role is filled by Cys-1701. Positions 1780, 1783, 1813, and 1815 each coordinate Zn(2+). A C4-type 2; atypical zinc finger spans residues 1780 to 1815 (CVECDAKFKNSVASINSAIVCASVKRDGVQVGYCVH). Catalysis depends on for PL2-PRO activity residues His-1863 and Asp-1868. The tract at residues 1925 to 2115 (FGDFLIHNFV…STVGVFLGYK (191 aa)) is HD1. The chain crosses the membrane as a helical span at residues 1998 to 2018 (LLLLIYTLYSVVLLCVRFGPF). The 3Ecto domain occupies 2005–2070 (LYSVVLLCVR…LDVVWKHITD (66 aa)). Intrachain disulfides connect Cys-2021–Cys-2048 and Cys-2039–Cys-2045. The next 2 helical transmembrane spans lie at 2068–2088 (ITDPLFSNMQPFIVMVLLLIF) and 2095–2115 (CFLLYFVAQMISTVGVFLGYK). Residues 2144 to 2234 (SFVRHVLFGC…ITKTNVQPTG (91 aa)) form a Y1 region. The CoV Nsp3 Y domain maps to 2144–2483 (SFVRHVLFGC…PATSIVAKQG (340 aa)). Residues His-2148, Cys-2153, Cys-2158, Cys-2161, Cys-2194, His-2197, Cys-2201, and Cys-2204 each contribute to the Zn(2+) site. A ZF1 region spans residues 2148–2161 (HVLFGCENPDCIAC). The segment at 2194 to 2204 (CKKHRFFCVDC) is ZF2. Residues 2235 to 2324 (PAYVMIDKVE…LVDSELLSTL (90 aa)) form a Y2 region. Residues 2235–2483 (PAYVMIDKVE…PATSIVAKQG (249 aa)) form a coV-Y region. A Y3 region spans residues 2325 to 2381 (SVDFNGVLHKAYIDVLRNSFGKDLNANMSLAECKRALGLSISDHEFTSAISNAHRCD). The segment at 2382–2483 (VLLSDLSFNN…PATSIVAKQG (102 aa)) is Y4. A run of 6 helical transmembrane segments spans residues 2491 to 2511 (LTWLWLLCGLVCLIQFYLCFF), 2731 to 2751 (LWNLVFNILSMFSSSFSVAAM), 2755 to 2775 (ILLNCALGAFAIFCCFLVTKF), 2782 to 2802 (LSVGVCTVVVAVLLNNVSYIV), 2809 to 2829 (MIAYAILYFFATRSLRYAWIW), and 2834 to 2854 (LIAYISFAPWWLCAWYFLAML). Residues 2491 to 2854 (LTWLWLLCGL…LCAWYFLAML (364 aa)) are HD2. A Nsp4C domain is found at 2870-2965 (LFEGDKFVGT…PTVSYGSTLQ (96 aa)). Residues 2966-3267 (AGLRKMAQPS…VKQMFGVNLQ (302 aa)) form the Peptidase C30 domain. Active-site for 3CL-PRO activity residues include His-3006 and Cys-3109. The next 7 membrane-spanning stretches (helical) occupy residues 3281 to 3301 (FAGFFVMFWAELFVYTTTIWV), 3304 to 3324 (GFLTPFMILLVALSLCLTFVV), 3328 to 3348 (VLFLQVFLLPSIIVAAIQNCA), 3367 to 3387 (VMQMDIQGFVNIFICLFVALL), 3401 to 3421 (CTYLFSLIAVLYTALYSYDYV), 3422 to 3442 (SLLVMLLCAISNEWYIGAIIF), and 3467 to 3487 (LLFYMLLGFVSCMYYGLLYWI). Residues 3281 to 3487 (FAGFFVMFWA…CMYYGLLYWI (207 aa)) are HD3. A RdRp Nsp7 cofactor domain is found at 3547 to 3629 (SKLTDLKCTN…SYFENDSILQ (83 aa)). The 195-residue stretch at 3630–3824 (SVASSFVGMP…LTCERVVKLQ (195 aa)) folds into the RdRp Nsp8 cofactor domain. Positions 3825-3933 (NNEIMPGKMK…GYIGATVRLQ (109 aa)) constitute a Nsp9 ssRNA-binding domain. The ExoN/MTase coactivator domain occupies 3934-4072 (AGKQTEFVSN…DRTAIQSFDN (139 aa)). Cys-4007, Cys-4010, His-4016, Cys-4023, Cys-4049, Cys-4052, Cys-4060, and Cys-4062 together coordinate Zn(2+). Zinc fingers lie at residues 4007–4023 (CIYCRAHVAHPTMDGFC) and 4049–4062 (CKVCGCWLNHGCTC).

This sequence belongs to the coronaviruses polyprotein 1ab family. As to quaternary structure, 3CL-PRO exists as monomer and homodimer. Eight copies of nsp7 and eight copies of nsp8 assemble to form a heterohexadecamer. Nsp9 is a dimer. Nsp10 forms a dodecamer. Specific enzymatic cleavages in vivo by its own proteases yield mature proteins. 3CL-PRO and PL-PRO proteinases are autocatalytically processed.

The protein resides in the host membrane. The protein localises to the host cytoplasm. It localises to the host perinuclear region. The catalysed reaction is Thiol-dependent hydrolysis of ester, thioester, amide, peptide and isopeptide bonds formed by the C-terminal Gly of ubiquitin (a 76-residue protein attached to proteins as an intracellular targeting signal).. Functionally, the papain-like proteinase 1 (PLP1) and papain-like proteinase 2 (PLP2) are responsible for the cleavages located at the N-terminus of the replicase polyprotein. In addition, PLP2 possesses a deubiquitinating/deISGylating activity and processes both 'Lys-48'- and 'Lys-63'-linked polyubiquitin chains from cellular substrates. PLP2 also antagonizes innate immune induction of type I interferon by blocking the nuclear translocation of host IRF-3. Responsible for the majority of cleavages as it cleaves the C-terminus of replicase polyprotein at 11 sites. Recognizes substrates containing the core sequence [ILMVF]-Q-|-[SGACN]. Inhibited by the substrate-analog Cbz-Val-Asn-Ser-Thr-Leu-Gln-CMK. Also contains an ADP-ribose-1''-phosphate (ADRP)-binding function. Its function is as follows. Nsp7-nsp8 hexadecamer may possibly confer processivity to the polymerase, maybe by binding to dsRNA or by producing primers utilized by the latter. In terms of biological role, nsp9 is a ssRNA-binding protein. The sequence is that of Replicase polyprotein 1a from Homo sapiens (Human).